The following is a 152-amino-acid chain: Holo-[acyl-carrier-protein] synthase (152 aa).

Residues Asp7 and Glu60 each coordinate Mg(2+).

Belongs to the P-Pant transferase superfamily. AcpS family. Requires Mg(2+) as cofactor.

It localises to the cytoplasm. It catalyses the reaction apo-[ACP] + CoA = holo-[ACP] + adenosine 3',5'-bisphosphate + H(+). Its function is as follows. Transfers the 4'-phosphopantetheine moiety from coenzyme A to a Ser of acyl-carrier-protein. This chain is Holo-[acyl-carrier-protein] synthase, found in Bifidobacterium adolescentis (strain ATCC 15703 / DSM 20083 / NCTC 11814 / E194a).